Reading from the N-terminus, the 196-residue chain is ATP-dependent Clp protease proteolytic subunit (196 aa).

Residue Ser-97 is the Nucleophile of the active site. Residue His-122 is part of the active site.

It belongs to the peptidase S14 family. Fourteen ClpP subunits assemble into 2 heptameric rings which stack back to back to give a disk-like structure with a central cavity, resembling the structure of eukaryotic proteasomes.

It localises to the cytoplasm. The enzyme catalyses Hydrolysis of proteins to small peptides in the presence of ATP and magnesium. alpha-casein is the usual test substrate. In the absence of ATP, only oligopeptides shorter than five residues are hydrolyzed (such as succinyl-Leu-Tyr-|-NHMec, and Leu-Tyr-Leu-|-Tyr-Trp, in which cleavage of the -Tyr-|-Leu- and -Tyr-|-Trp bonds also occurs).. In terms of biological role, cleaves peptides in various proteins in a process that requires ATP hydrolysis. Has a chymotrypsin-like activity. Plays a major role in the degradation of misfolded proteins. In Lacticaseibacillus paracasei (strain ATCC 334 / BCRC 17002 / CCUG 31169 / CIP 107868 / KCTC 3260 / NRRL B-441) (Lactobacillus paracasei), this protein is ATP-dependent Clp protease proteolytic subunit.